Here is a 956-residue protein sequence, read N- to C-terminus: Ubiquitin carboxyl-terminal hydrolase CYLD (956 aa).

The segment at 106–593 is interaction with TRIP; the sequence is CEERFSLFKN…LEIMIGKKKG (488 aa). 2 consecutive CAP-Gly domains span residues 153–198 and 253–286; these read LAER…VFVA and DVLP…VQLC. Residues 309 to 353 are disordered; the sequence is SVTQERRPPKLAFMSRGVGDKGSSSHNKPKATGSTSDPGNRNRSE. The segment covering 330 to 349 has biased composition (polar residues); the sequence is GSSSHNKPKATGSTSDPGNR. Serine 387 carries the post-translational modification Phosphoserine. Positions 392–411 are disordered; sequence STDFDRSSPPLQPPPVNSLT. The tract at residues 394-469 is interaction with TRAF2; the sequence is DFDRSSPPLQ…LAMPPGNSHG (76 aa). A phosphoserine mark is found at serine 418 and serine 422. An interaction with IKBKG/NEMO region spans residues 470–554; sequence LEVGSLAEVK…FASLQPVSNQ (85 aa). Positions 492 to 535 constitute a CAP-Gly 3 domain; that stretch reads GQPPGLNEVLAGLELEDECAGCTDGTFRGTRYFTCALKKALFVK. In terms of domain architecture, USP spans 592–950; that stretch reads KGIQGHYNSC…DAYMCMYQSP (359 aa). Catalysis depends on cysteine 601, which acts as the Nucleophile. The segment at 781 to 833 is B-box; sequence LEDTPRQCRICGGLAMYECRECYDDPDISAGKIKQFCKTCNTQVHLHPKRLNH. The Zn(2+) site is built by cysteine 788, cysteine 791, cysteine 799, cysteine 802, cysteine 817, cysteine 820, histidine 825, and histidine 833. Histidine 871 serves as the catalytic Proton acceptor.

This sequence belongs to the peptidase C19 family. In terms of assembly, interacts (via CAP-Gly domain) with IKBKG/NEMO (via proline-rich C-terminal region). Interacts with TRAF2 and TRIP. Interacts with PLK1, DVL1, DVL3, MAVS, TBK1, IKKE and RIGI. Interacts (via CAP-Gly domain) with microtubules. Interacts with HDAC6 and BCL3. Interacts with MAP3K7. Identified in a complex with TRAF6 and SQSTM1. Interacts with OPTN and SQSTM1. Interacts with CEP350. Interacts with RNF31; the interaction is indirect and is mediated via SPATA2. Interacts with SPATA2 (via the PUB domain); the interaction is direct and recruits CYLD to the LUBAC complex, thereby regulating TNF-alpha-induced necroptosis. Ubiquitinated. Polyubiquitinated in hepatocytes treated with palmitic acid. Ubiquitination is mediated by E3 ligase TRIM47 and leads to proteasomal degradation. In terms of processing, phosphorylated on several serine residues by IKKA and/or IKKB in response to immune stimuli. Phosphorylation requires IKBKG. Phosphorylation abolishes TRAF2 deubiquitination, interferes with the activation of Jun kinases, and strongly reduces CD40-dependent gene activation by NF-kappa-B. As to expression, detected in fetal brain, testis, and skeletal muscle, and at a lower level in adult brain, leukocytes, liver, heart, kidney, spleen, ovary and lung. Isoform 2 is found in all tissues except kidney.

It localises to the cytoplasm. Its subcellular location is the perinuclear region. The protein localises to the cytoskeleton. The protein resides in the cell membrane. It is found in the microtubule organizing center. It localises to the centrosome. Its subcellular location is the spindle. The protein localises to the cilium basal body. It catalyses the reaction Thiol-dependent hydrolysis of ester, thioester, amide, peptide and isopeptide bonds formed by the C-terminal Gly of ubiquitin (a 76-residue protein attached to proteins as an intracellular targeting signal).. Its activity is regulated as follows. Inhibited by phosphorylation at serine residues. Deubiquitinase that specifically cleaves 'Lys-63'- and linear 'Met-1'-linked polyubiquitin chains and is involved in NF-kappa-B activation and TNF-alpha-induced necroptosis. Negatively regulates NF-kappa-B activation by deubiquitinating upstream signaling factors. Contributes to the regulation of cell survival, proliferation and differentiation via its effects on NF-kappa-B activation. Negative regulator of Wnt signaling. Inhibits HDAC6 and thereby promotes acetylation of alpha-tubulin and stabilization of microtubules. Plays a role in the regulation of microtubule dynamics, and thereby contributes to the regulation of cell proliferation, cell polarization, cell migration, and angiogenesis. Required for normal cell cycle progress and normal cytokinesis. Inhibits nuclear translocation of NF-kappa-B. Plays a role in the regulation of inflammation and the innate immune response, via its effects on NF-kappa-B activation. Dispensable for the maturation of intrathymic natural killer cells, but required for the continued survival of immature natural killer cells. Negatively regulates TNFRSF11A signaling and osteoclastogenesis. Involved in the regulation of ciliogenesis, allowing ciliary basal bodies to migrate and dock to the plasma membrane; this process does not depend on NF-kappa-B activation. Ability to remove linear ('Met-1'-linked) polyubiquitin chains regulates innate immunity and TNF-alpha-induced necroptosis: recruited to the LUBAC complex via interaction with SPATA2 and restricts linear polyubiquitin formation on target proteins. Regulates innate immunity by restricting linear polyubiquitin formation on RIPK2 in response to NOD2 stimulation. Involved in TNF-alpha-induced necroptosis by removing linear ('Met-1'-linked) polyubiquitin chains from RIPK1, thereby regulating the kinase activity of RIPK1. Negatively regulates intestinal inflammation by removing 'Lys-63' linked polyubiquitin chain of NLRP6, thereby reducing the interaction between NLRP6 and PYCARD/ASC and formation of the NLRP6 inflammasome. Does not catalyze deubiquitination of heterotypic 'Lys-63'-/'Lys-48'-linked branched ubiquitin chains. Removes 'Lys-63' linked polyubiquitin chain of MAP3K7, which inhibits phosphorylation and blocks downstream activation of the JNK-p38 kinase cascades. Also removes 'Lys-63'-linked polyubiquitin chains of MAP3K1 and MA3P3K3, which inhibit their interaction with MAP2K1 and MAP2K2. The sequence is that of Ubiquitin carboxyl-terminal hydrolase CYLD from Homo sapiens (Human).